The following is a 372-amino-acid chain: Oxidoreductase ptaL (372 aa).

Residues 1 to 16 (MKHIVIIGGGFAGVST) form the signal peptide. Residues 8 to 12 (GGGFA) and Arg-51 contribute to the 6-hydroxy-FAD site. N-linked (GlcNAc...) asparagine glycosylation is present at Asn-251. Asp-285 provides a ligand contact to 6-hydroxy-FAD.

This sequence belongs to the FAD-dependent oxidoreductase family. The cofactor is 6-hydroxy-FAD.

The protein operates within secondary metabolite biosynthesis. Its function is as follows. Oxidoreductase; part of the gene cluster that mediates the biosynthesis of pestheic acid, a diphenyl ether which is a biosynthetic precursor of the unique chloropupukeananes. The biosynthesis initiates from condensation of acetate and malonate units catalyzed by the non-reducing PKS ptaA. As the ptaA protein is TE/CLC domain-deficient, hydrolysis and Claisen cyclization of the polyketide could be catalyzed by ptaB containing a beta-lactamase domain. The ptaB protein might hydrolyze the thioester bond between the ACP of ptaA and the intermediate to release atrochrysone carboxylic acid, which is spontaneously dehydrated to form endocrocin anthrone. Endocrocin anthrone is then converted to endocrocin, catalyzed by the anthrone oxygenase ptaC. Spontaneous decarboxylation of endocrocin occurs to generate emodin. An O-methyltransferase (ptaH or ptaI) could methylate emodin to form physcion. PtaJ could then catalyze the oxidative cleavage of physcion, and rotation of the intermediate could then afford desmethylisosulochrin. PtaF, a putative NADH-dependent oxidoreductase, might also participate in the oxidative cleavage step. Desmethylisosulochrin is then transformed by another O-methyltransferase (ptaH or ptaI) to form isosulochrin. Chlorination of isosulochrin by ptaM in the cyclohexadienone B ring then produces chloroisosulochrin. PtaE is responsible for the oxidative coupling reactions of both benzophenones isosulochrin and chloroisosulochrin to RES-1214-1 and pestheic acid respectively, regardless of chlorination. This chain is Oxidoreductase ptaL, found in Pestalotiopsis fici (strain W106-1 / CGMCC3.15140).